The sequence spans 1459 residues: MDFEQYGQSSQQPRQRRRRAGKRRLNNKTPIAARLALDPQLRGKVGILSEDLANDLFQQQALQDVTTSDDGVLYVAIAPHTPTYTSVEDQAWTILPVRIQPTERSPVAMSHSTVLFPESADSLQPFLQALGKVDSSRNSLQAHRSVEIRILDVAPIHLDTIFVTVERHLLRNHDDVQTKFGGGFTNAQGPNGLWGKTGKSVEAKKYSKRAAADAEQRLTAAVREALGAQRIVHTGDVLPLPLPSHPITYAPPPPARISFCEPVSQGLLMSTTKIVLVQARPQGIRAQQTMPSRSALLKQVAEDEADDTSNEQFYSAAEDKPGESGTEMEVTSAAEESETEGSAGSMSDSSDDSLEDMISLSAPELPQPPSGVMSSLTSATPRAGGRRSDGIHTPGSVASNFTSATMRPGRGGGKTFKVEGLLQQVPNEVLHPRPRDDEDVDSFVFVDISTLAKIGCFSGDWVRIEAAEEPQLNMFASLKFGSFNDSPEDSGDWRPVKIFGLSGLPSSKPRYAINHSGERRPSISQRPPTRLTPSVFVPPLLLGNIENPKYLRISPMTFATPNGSSKPGILQHMKNTAAKNPPLAKEVTLLKVSTPLSMDRVLQPALFAGLKQYFESRRRILKSGDLVGISVDEGLGRAVFSGTGSGDSASQEEDITIRLGQGANATNAGTRKIGVAWFRVGQVAPTTVEELEETGEDQWGGVAVLDPATTRMVQAGSDVSRVPGVLGNGWEYWLGVKTIPKTVHDAPTPHGIVADPPQSVIPPLQQRIRDLMSAATSPRAIQLGMKPVFILLRSQQRHIGKATVATRACSDIGIHTFPIDAYDILTEGGANGGDVKTEAYLKARAERAFHCGANCTALLIRHIEVLTADRIVTAMSDILNDARVVIATTTDVETIPEGIRSLITHEFEMGAPEEKEREGILQNAVTERGIRLSADVDLGSIALKTAALVAGDLVDVVERAAGARTARLESLAEASKKISGSEVFVRDVLLAGGDGARGVTKADFDAAVEAARKNFADSIGAPKIPNVGWDDVGGLTNVKDALVETIQLPLERPELFAKGMKKRSGILFYGPPGTGKTLLAKAIATEFSLNFFSVKGPELLNMYIGESEANVRRVFQRARDARPCVVFFDELDSVAPKRGNQGDSGGVMDRIVSQLLAELDGMNGGEENSGGVFVIGATNRPDLLDTALLRPGRFDKMLYLGVSDTHRKQATILEALTRKFALHPDVSLDRVAEQLPLTYTGADLYALCSDAMLKAITRKATAVDEKINALPNGPVSTAWFFDHLATKEDVNVMVTEEDFLSAQGELVPSVSAKELEHFERIRQTFEAVDKSKQDPAAAAPQTIAEAMEAFSLGGSAIPEEAPTINGDSLTPGGIHGRIKGLNRWPGNPVRSTSGQSTTSSKGKGKSVSKKGKSRTGAESDGSVDGDDEDMADANSKEDEDEDDYVVRTDHLRNPMEEVE.

Over residues 1 to 13 the composition is skewed to low complexity; the sequence is MDFEQYGQSSQQP. Disordered regions lie at residues 1–28 and 316–410; these read MDFEQYGQSSQQPRQRRRRAGKRRLNNK and AAED…RPGR. Basic residues predominate over residues 14 to 26; it reads RQRRRRAGKRRLN. Residues 327 to 348 show a composition bias toward low complexity; sequence EMEVTSAAEESETEGSAGSMSD. Residues 396 to 405 are compositionally biased toward polar residues; it reads SVASNFTSAT. Residue 1070–1077 coordinates ATP; that stretch reads GPPGTGKT. The segment at 1357-1459 is disordered; the sequence is IPEEAPTING…HLRNPMEEVE (103 aa). Residues 1391–1401 show a composition bias toward low complexity; it reads STSGQSTTSSK. Residues 1402 to 1413 are compositionally biased toward basic residues; that stretch reads GKGKSVSKKGKS. Positions 1421-1443 are enriched in acidic residues; it reads GSVDGDDEDMADANSKEDEDEDD. The span at 1444–1459 shows a compositional bias: basic and acidic residues; it reads YVVRTDHLRNPMEEVE.

It belongs to the AAA ATPase family. As to quaternary structure, interacts with PEX1; forming the PEX1-PEX6 AAA ATPase complex, which is composed of a heterohexamer formed by a trimer of PEX1-PEX6 dimers.

Its subcellular location is the cytoplasm. It is found in the cytosol. The protein resides in the peroxisome membrane. The enzyme catalyses ATP + H2O = ADP + phosphate + H(+). In terms of biological role, component of the PEX1-PEX6 AAA ATPase complex, a protein dislocase complex that mediates the ATP-dependent extraction of the PEX5 receptor from peroxisomal membranes, an essential step for PEX5 recycling. Specifically recognizes PEX5 monoubiquitinated at 'Cys-6', and pulls it out of the peroxisome lumen through the PEX2-PEX10-PEX12 retrotranslocation channel. Extraction by the PEX1-PEX6 AAA ATPase complex is accompanied by unfolding of the TPR repeats and release of bound cargo from PEX5. This Penicillium chrysogenum (Penicillium notatum) protein is Peroxisomal ATPase PEX6 (pex6).